The following is a 159-amino-acid chain: Succinate dehydrogenase [ubiquinone] cytochrome b small subunit, mitochondrial (159 aa).

The transit peptide at 1 to 56 directs the protein to the mitochondrion; sequence MAVLWRLSAVCGAQGGRALLLRTPVVRPAHISAFLQDRPIPEWCGVQHIHLSPGHH. Over 57 to 63 the chain is Mitochondrial matrix; it reads SGSKAAS. Residues 64-85 traverse the membrane as a helical segment; it reads LHWTSERVVSVLLLGLLPAAYL. The Mitochondrial intermembrane segment spans residues 86 to 90; that stretch reads NPCSA. Residues 91–111 form a helical membrane-spanning segment; the sequence is MDYSLAATLTLHGHWGLGQVV. H102 lines the heme b pocket. Topologically, residues 112-120 are mitochondrial matrix; it reads TDYVHGDAS. Y114 lines the a ubiquinone pocket. The helical transmembrane segment at 121–142 threads the bilayer; that stretch reads QKAAKAGLLALSALTFAGLCYF. At 143–159 the chain is on the mitochondrial intermembrane side; sequence NYHDVGICKAVAMLWKL.

It belongs to the CybS family. Component of complex II composed of four subunits: the flavoprotein (FP) SDHA, iron-sulfur protein (IP) SDHB, and a cytochrome b560 composed of SDHC and SDHD.

The protein localises to the mitochondrion inner membrane. The protein operates within carbohydrate metabolism; tricarboxylic acid cycle. In terms of biological role, membrane-anchoring subunit of succinate dehydrogenase (SDH) that is involved in complex II of the mitochondrial electron transport chain and is responsible for transferring electrons from succinate to ubiquinone (coenzyme Q). SDH also oxidizes malate to the non-canonical enol form of oxaloacetate, enol-oxaloacetate. Enol-oxaloacetate, which is a potent inhibitor of the succinate dehydrogenase activity, is further isomerized into keto-oxaloacetate. The sequence is that of Succinate dehydrogenase [ubiquinone] cytochrome b small subunit, mitochondrial (SDHD) from Pongo abelii (Sumatran orangutan).